Consider the following 432-residue polypeptide: Ubiquitin-like modifier-activating enzyme 5 (432 aa).

The segment at 25 to 47 (ETKKNQTPSVLKGPTVSQERPSA) is disordered. Positions 29–44 (NQTPSVLKGPTVSQER) are enriched in polar residues. ATP is bound by residues Gly-96, Asp-117, Lys-140, Asn-163, and Asn-196. Zn(2+) contacts are provided by Cys-238 and Cys-241. Cys-262 functions as the Glycyl thioester intermediate in the catalytic mechanism. Residues Cys-315 and Cys-320 each contribute to the Zn(2+) site. Residues 363–406 (DTTEAPSSSAATEVAPGLKFAYEPTQTPKKNSSDNLKLSPSQAV) form a disordered region. Over residues 386–406 (PTQTPKKNSSDNLKLSPSQAV) the composition is skewed to polar residues.

The protein belongs to the ubiquitin-activating E1 family. UBA5 subfamily. In terms of assembly, interacts with ufc-1.

E1-like enzyme which activates ufm-1. Required for interaction between ufm-1 and ufc-1. The sequence is that of Ubiquitin-like modifier-activating enzyme 5 from Caenorhabditis briggsae.